The following is a 294-amino-acid chain: 33 kDa chaperonin (294 aa).

Cystine bridges form between Cys-230/Cys-232 and Cys-263/Cys-266.

This sequence belongs to the HSP33 family. Under oxidizing conditions two disulfide bonds are formed involving the reactive cysteines. Under reducing conditions zinc is bound to the reactive cysteines and the protein is inactive.

It localises to the cytoplasm. In terms of biological role, redox regulated molecular chaperone. Protects both thermally unfolding and oxidatively damaged proteins from irreversible aggregation. Plays an important role in the bacterial defense system toward oxidative stress. The chain is 33 kDa chaperonin from Chromobacterium violaceum (strain ATCC 12472 / DSM 30191 / JCM 1249 / CCUG 213 / NBRC 12614 / NCIMB 9131 / NCTC 9757 / MK).